Reading from the N-terminus, the 265-residue chain is Undecaprenyl-diphosphatase (265 aa).

Transmembrane regions (helical) follow at residues 7–27 (VIVSIIIGVIEGITEFLPISS), 45–65 (TKILEIFIEFGSALSILYFFH), 86–106 (LHILLAILPTIFFGLLFYKKI), 108–128 (LLFNTYNVMYALILGGIFLLI), 145–165 (ISLLQSAIIGFFQIFCLYPGF), 186–206 (IEFSFIISIPLIMGASFYDFI), 214–234 (ILDLPIFFIGFMISFIVSILC), and 245–265 (TSLIFFGIYRFIISGLIYFIN).

It belongs to the UppP family.

The protein localises to the cell membrane. The catalysed reaction is di-trans,octa-cis-undecaprenyl diphosphate + H2O = di-trans,octa-cis-undecaprenyl phosphate + phosphate + H(+). Catalyzes the dephosphorylation of undecaprenyl diphosphate (UPP). Confers resistance to bacitracin. The polypeptide is Undecaprenyl-diphosphatase (Buchnera aphidicola subsp. Acyrthosiphon pisum (strain 5A)).